A 715-amino-acid polypeptide reads, in one-letter code: Eosinophil peroxidase (715 aa).

An N-terminal signal peptide occupies residues 1–17; sequence MHLLPALAGVLATLVLA. The propeptide occupies 18–139; the sequence is QPCEGTDPAS…SGCALRDQAE (122 aa). Residues Asn52 and Asn113 are each glycosylated (N-linked (GlcNAc...) asparagine). An intrachain disulfide couples Cys141 to Cys152. Asp232 is a heme b binding site. The active-site Proton acceptor is the His233. Asp234 contacts Ca(2+). 2 disulfides stabilise this stretch: Cys253-Cys263 and Cys257-Cys281. Residues Thr306, Phe308, Asp310, and Ser312 each contribute to the Ca(2+) site. N-linked (GlcNAc...) asparagine glycans are attached at residues Asn327 and Asn363. A disulfide bridge connects residues Cys359 and Cys370. Glu380 and His474 together coordinate heme b. Tyr488 carries the 3'-nitrotyrosine modification. Cystine bridges form between Cys578-Cys635 and Cys676-Cys701. 2 N-linked (GlcNAc...) asparagine glycosylation sites follow: Asn700 and Asn708.

Belongs to the peroxidase family. XPO subfamily. As to quaternary structure, tetramer of two light chains and two heavy chains. Requires Ca(2+) as cofactor. Heme b is required as a cofactor.

Its subcellular location is the cytoplasmic granule. The enzyme catalyses 2 a phenolic donor + H2O2 = 2 a phenolic radical donor + 2 H2O. Functionally, mediates tyrosine nitration of secondary granule proteins in mature resting eosinophils. Shows significant inhibitory activity towards Mycobacterium tuberculosis H37Rv by inducing bacterial fragmentation and lysis. In Homo sapiens (Human), this protein is Eosinophil peroxidase (EPX).